We begin with the raw amino-acid sequence, 312 residues long: Zinc finger protein-like 1 (312 aa).

A B box-type; degenerate zinc finger spans residues M1 to W43. At M1–G268 the chain is on the cytoplasmic side. The RING-type; degenerate zinc-finger motif lies at C53–S101. The interval E144–D233 is disordered. Over residues L148–A173 the composition is skewed to polar residues. The segment covering K215–D233 has biased composition (basic and acidic residues). The chain crosses the membrane as a helical span at residues L269 to G289. The Lumenal portion of the chain corresponds to R290 to S312.

Belongs to the ZFPL1 family. In terms of assembly, interacts with GOLGA2/GM130. Phosphorylated.

The protein localises to the golgi apparatus. It localises to the cis-Golgi network membrane. Required for cis-Golgi integrity and efficient ER to Golgi transport. Involved in the maintenance of the integrity of the cis-Golgi, possibly via its interaction with GOLGA2/GM130. The protein is Zinc finger protein-like 1 (ZFPL1) of Bos taurus (Bovine).